The following is a 287-amino-acid chain: Acetylglutamate kinase (287 aa).

Substrate contacts are provided by residues Gly64 to Gly65, Arg86, and Asn185.

It belongs to the acetylglutamate kinase family. ArgB subfamily.

The protein localises to the cytoplasm. It carries out the reaction N-acetyl-L-glutamate + ATP = N-acetyl-L-glutamyl 5-phosphate + ADP. It participates in amino-acid biosynthesis; L-arginine biosynthesis; N(2)-acetyl-L-ornithine from L-glutamate: step 2/4. Its function is as follows. Catalyzes the ATP-dependent phosphorylation of N-acetyl-L-glutamate. The chain is Acetylglutamate kinase from Hydrogenobaculum sp. (strain Y04AAS1).